Reading from the N-terminus, the 160-residue chain is Glutathione peroxidase homolog BsaA (160 aa).

Cys35 is an active-site residue.

Belongs to the glutathione peroxidase family.

This chain is Glutathione peroxidase homolog BsaA (bsaA), found in Bacillus subtilis (strain 168).